A 275-amino-acid polypeptide reads, in one-letter code: 2-dehydro-3-deoxyphosphooctonate aldolase (275 aa).

The protein belongs to the KdsA family.

It is found in the cytoplasm. The catalysed reaction is D-arabinose 5-phosphate + phosphoenolpyruvate + H2O = 3-deoxy-alpha-D-manno-2-octulosonate-8-phosphate + phosphate. It functions in the pathway carbohydrate biosynthesis; 3-deoxy-D-manno-octulosonate biosynthesis; 3-deoxy-D-manno-octulosonate from D-ribulose 5-phosphate: step 2/3. The protein operates within bacterial outer membrane biogenesis; lipopolysaccharide biosynthesis. The chain is 2-dehydro-3-deoxyphosphooctonate aldolase from Francisella tularensis subsp. holarctica (strain LVS).